A 32-amino-acid chain; its full sequence is Calcitonin (32 aa).

A disulfide bridge links Cys-1 with Cys-7. Pro-32 is subject to Proline amide.

It belongs to the calcitonin family.

It localises to the secreted. Functionally, causes a rapid but short-lived drop in the level of calcium and phosphate in blood by promoting the incorporation of those ions in the bones. The protein is Calcitonin of Anguilla japonica (Japanese eel).